We begin with the raw amino-acid sequence, 277 residues long: ILVDAQGRRFMTALDPAAELAPRDVVTRGVAAAIKAGKGAFLDARTALGAAFPQAFPTVYAACRASGIDPVRQPIPIAPAAHYHMGGVLTDSFGRTSIDGLWAVGEVACTGAHGANRLASNSLLEAVVFAARVAGDVGAAPLRRGWPPPAPPDLSPRPPPAEDAAAITRLRATMSARVGVIRDGQGLESALATIETIAAGARSPRLRAMTTAARLITAAALARRESRGAHFRADYPATDPAQSHRATAPFGPLRTVPPHPAQSLGEGLAAPPMETRS.

R23 acts as the Proton donor/acceptor in catalysis. FAD is bound by residues E106 and 122–123 (SL). 2 disordered regions span residues 142–161 (LRRGWPPPAPPDLSPRPPPA) and 234–277 (DYPA…ETRS). Residues 146 to 161 (WPPPAPPDLSPRPPPA) show a composition bias toward pro residues.

Belongs to the FAD-dependent oxidoreductase 2 family. NadB subfamily. Requires FAD as cofactor.

The protein resides in the cytoplasm. The enzyme catalyses L-aspartate + O2 = iminosuccinate + H2O2. It functions in the pathway cofactor biosynthesis; NAD(+) biosynthesis; iminoaspartate from L-aspartate (oxidase route): step 1/1. Its function is as follows. Catalyzes the oxidation of L-aspartate to iminoaspartate, the first step in the de novo biosynthesis of NAD(+). This Rhodospirillum rubrum protein is L-aspartate oxidase (nadB).